The primary structure comprises 661 residues: Transmembrane and coiled-coil domain-containing protein STS1 (661 aa).

2 disordered regions span residues 34–71 and 154–185; these read AHHH…GADA and VGNT…DDQL. Residues 59-69 are compositionally biased toward low complexity; the sequence is SSSSSNSGAGA. Over residues 175–184 the composition is skewed to basic and acidic residues; the sequence is SPGESSHDDQ. A run of 4 helical transmembrane segments spans residues 306–326, 333–353, 355–375, and 466–486; these read ALLA…FGAL, LVPV…GSVA, SVAV…SKMA, and LSGL…TDFI.

It belongs to the TMCO4 family. As to quaternary structure, interacts with PKS10/PKS2 and 4CLL9/ACOS12.

It localises to the endoplasmic reticulum membrane. Functionally, involved in anther lipids biosynthesis and is required for tapetum degradation and pollen wall formation. Required for the formation of Ubisch bodies and microspores. Possesses lipase activity in vitro toward two synthetic substrates, p-nitrophenyl acetate (pNPA) and p-nitrophenyl butyrate (pNPB). The polypeptide is Transmembrane and coiled-coil domain-containing protein STS1 (Oryza sativa subsp. japonica (Rice)).